Reading from the N-terminus, the 347-residue chain is Zinc-type alcohol dehydrogenase-like protein C16A3.02c (347 aa).

Belongs to the zinc-containing alcohol dehydrogenase family. Quinone oxidoreductase subfamily.

The protein localises to the golgi apparatus. It localises to the endoplasmic reticulum. The chain is Zinc-type alcohol dehydrogenase-like protein C16A3.02c from Schizosaccharomyces pombe (strain 972 / ATCC 24843) (Fission yeast).